The chain runs to 600 residues: MTKENLENELKTLPNSTGVYQYFNQEGKLLYVGKAKNLKNRVRSYFAFTPNLHANPRNSLRIQKMIEETVHLEFIATNSEADALILENSFIKQLHPKYNILLRDDKTYPYIYVDFEEEFPRFEITRKLVKKSKIKYFGPFFKGARELLDALYLYYPLKQKASCKSPCIFYQISRCLAPCDKLISREKYLEILDEAIHALLNPSVLLKNLEKQMLVLAQNENYEEAAKVRDQIAMIKDLEVKVEIDIAKLEDFEVFALAFKNSVLSTLRFVVQNGKIISANSKITPIKNDIQWDQNEIYKQLILENFSMDIPLLANVIYVYEEFEDRVLLEEILSQRFDKKISIKIPKIGEKRRICDLAFQNALLNIEKEQKNHDFTIQKELKSYFELENLPNDIEIFDNSHLQGVANVGAMVTYRINSWDKSKYRKFHLKHKNDYDQMREVLTRRALDFDKIPPPDLWLIDGGKALLDLAKEIIVSSGVNVDILAISKEKIDAKAHRAKGGAKDKIHSLKGEFSLSINDKKLQFLQKLRDEAHRFAISFHQNTKKKQDLKSSKLANLGLSSGVMQKLLAYYGNFESIYKADFKDLTMLVGRKAAQKIKEN.

In terms of domain architecture, GIY-YIG spans 15-100 (NSTGVYQYFN…IKQLHPKYNI (86 aa)). A UVR domain is found at 203–238 (SVLLKNLEKQMLVLAQNENYEEAAKVRDQIAMIKDL).

This sequence belongs to the UvrC family. Interacts with UvrB in an incision complex.

It is found in the cytoplasm. In terms of biological role, the UvrABC repair system catalyzes the recognition and processing of DNA lesions. UvrC both incises the 5' and 3' sides of the lesion. The N-terminal half is responsible for the 3' incision and the C-terminal half is responsible for the 5' incision. The polypeptide is UvrABC system protein C (Campylobacter jejuni subsp. jejuni serotype O:2 (strain ATCC 700819 / NCTC 11168)).